A 404-amino-acid polypeptide reads, in one-letter code: Cysteine desulfurase IscS (404 aa).

Pyridoxal 5'-phosphate-binding positions include 75–76 (AT), asparagine 155, glutamine 183, and 203–205 (SAH). N6-(pyridoxal phosphate)lysine is present on lysine 206. Threonine 243 serves as a coordination point for pyridoxal 5'-phosphate. Cysteine 328 acts as the Cysteine persulfide intermediate in catalysis. Cysteine 328 contacts [2Fe-2S] cluster.

Belongs to the class-V pyridoxal-phosphate-dependent aminotransferase family. NifS/IscS subfamily. As to quaternary structure, homodimer. Forms a heterotetramer with IscU, interacts with other sulfur acceptors. Pyridoxal 5'-phosphate serves as cofactor.

It is found in the cytoplasm. The enzyme catalyses (sulfur carrier)-H + L-cysteine = (sulfur carrier)-SH + L-alanine. It functions in the pathway cofactor biosynthesis; iron-sulfur cluster biosynthesis. Master enzyme that delivers sulfur to a number of partners involved in Fe-S cluster assembly, tRNA modification or cofactor biosynthesis. Catalyzes the removal of elemental sulfur atoms from cysteine to produce alanine. Functions as a sulfur delivery protein for Fe-S cluster synthesis onto IscU, an Fe-S scaffold assembly protein, as well as other S acceptor proteins. The chain is Cysteine desulfurase IscS from Buchnera aphidicola subsp. Baizongia pistaciae (strain Bp).